The following is a 105-amino-acid chain: Large ribosomal subunit protein uL24 (105 aa).

Belongs to the universal ribosomal protein uL24 family. In terms of assembly, part of the 50S ribosomal subunit.

One of two assembly initiator proteins, it binds directly to the 5'-end of the 23S rRNA, where it nucleates assembly of the 50S subunit. In terms of biological role, one of the proteins that surrounds the polypeptide exit tunnel on the outside of the subunit. In Acinetobacter baumannii (strain AB307-0294), this protein is Large ribosomal subunit protein uL24.